The following is an 89-amino-acid chain: Albumin-1 (89 aa).

Residue Ala1 is a signal peptide. 3 cysteine pairs are disulfide-bonded: Cys4–Cys21, Cys8–Cys23, and Cys16–Cys33. Residues 39–46 (LSSVAKMI) constitute a propeptide that is removed on maturation.

The C-terminal glycine may be removed from A1b.

In terms of biological role, A1b binds to basic 7S globulin (BG) and stimulates its phosphorylation activity. This is Albumin-1 (LEG) from Vigna radiata var. radiata (Mung bean).